The primary structure comprises 123 residues: Small ribosomal subunit protein uS12 (123 aa).

Residues 1-24 are disordered; it reads MPTINQLVRKGRTPQKVKSKVPAM. Positions 9 to 19 are enriched in basic residues; sequence RKGRTPQKVKS. Asp89 is subject to 3-methylthioaspartic acid.

The protein belongs to the universal ribosomal protein uS12 family. In terms of assembly, part of the 30S ribosomal subunit. Contacts proteins S8 and S17. May interact with IF1 in the 30S initiation complex.

Functionally, with S4 and S5 plays an important role in translational accuracy. Interacts with and stabilizes bases of the 16S rRNA that are involved in tRNA selection in the A site and with the mRNA backbone. Located at the interface of the 30S and 50S subunits, it traverses the body of the 30S subunit contacting proteins on the other side and probably holding the rRNA structure together. The combined cluster of proteins S8, S12 and S17 appears to hold together the shoulder and platform of the 30S subunit. In Sphingopyxis alaskensis (strain DSM 13593 / LMG 18877 / RB2256) (Sphingomonas alaskensis), this protein is Small ribosomal subunit protein uS12.